The primary structure comprises 422 residues: Histidine--tRNA ligase (422 aa).

The protein belongs to the class-II aminoacyl-tRNA synthetase family. Homodimer.

The protein resides in the cytoplasm. It catalyses the reaction tRNA(His) + L-histidine + ATP = L-histidyl-tRNA(His) + AMP + diphosphate + H(+). The chain is Histidine--tRNA ligase from Aliivibrio fischeri (strain ATCC 700601 / ES114) (Vibrio fischeri).